A 140-amino-acid polypeptide reads, in one-letter code: Large ribosomal subunit protein bL19 (140 aa).

Basic and acidic residues predominate over residues R113–I126. A disordered region spans residues R113 to E140.

Belongs to the bacterial ribosomal protein bL19 family.

In terms of biological role, this protein is located at the 30S-50S ribosomal subunit interface and may play a role in the structure and function of the aminoacyl-tRNA binding site. This is Large ribosomal subunit protein bL19 from Xanthobacter autotrophicus (strain ATCC BAA-1158 / Py2).